A 374-amino-acid polypeptide reads, in one-letter code: Tryptophan--tRNA ligase (374 aa).

Residues 81–89 carry the 'HIGH' region motif; sequence PSGPVHIGH. The 'KMSKS' region motif lies at 258–262; the sequence is KMSAS.

The protein belongs to the class-I aminoacyl-tRNA synthetase family.

Its subcellular location is the cytoplasm. It catalyses the reaction tRNA(Trp) + L-tryptophan + ATP = L-tryptophyl-tRNA(Trp) + AMP + diphosphate + H(+). The protein is Tryptophan--tRNA ligase of Pyrobaculum arsenaticum (strain DSM 13514 / JCM 11321 / PZ6).